Consider the following 342-residue polypeptide: MGYEKFTWVIKNFSSLQSEYIKSDIFVIGGCKWCLLAYPNGKQNASYLSLYLDGPTLKTLPCGCRRRIRFRLTVVNQLSENLSRRGEGKRWFDKKLPLCGYEEVLLLTKLNAKHGGFLVNNEVKIVAEVDVLEVIGKLDVSKESQEVIKPRKRMRLYGDGGAVSSHLHKETSSVDVNGFQVLPSQAESVKRIFERHPYMALEFRAKNQQLRASCINVLLSLIKTLCQSLQDISIDDLGQTEQVLTFLQNSGFKVDWLERKLEEVKEKKIQEHIGKSRMQGLEEDLKVFKKKCSDIEALLEKEKEELKGLKQKCSDIEALLEKEKGKVLAAAARTPLTFDDIL.

The MATH domain occupies 3 to 129 (YEKFTWVIKN…NNEVKIVAEV (127 aa)). A coiled-coil region spans residues 253-327 (KVDWLERKLE…ALLEKEKGKV (75 aa)).

This is MATH domain and coiled-coil domain-containing protein At3g44800 from Arabidopsis thaliana (Mouse-ear cress).